We begin with the raw amino-acid sequence, 209 residues long: Probable GTP-binding protein EngB (209 aa).

Residues 22 to 198 (TPLEIAFVGR…NRTVGSWFDA (177 aa)) enclose the EngB-type G domain. Mg(2+) is bound by residues serine 37 and threonine 59.

It belongs to the TRAFAC class TrmE-Era-EngA-EngB-Septin-like GTPase superfamily. EngB GTPase family. Mg(2+) serves as cofactor.

Necessary for normal cell division and for the maintenance of normal septation. This chain is Probable GTP-binding protein EngB, found in Neisseria gonorrhoeae.